Reading from the N-terminus, the 412-residue chain is Motilin receptor (412 aa).

Residues 1 to 35 (MGSPWNGSDGPEGAREPPWPALPPCDERRCSPFPL) are Extracellular-facing. N6 carries an N-linked (GlcNAc...) asparagine glycan. The helical transmembrane segment at 36-56 (GALVPVTAVCLCLFVVGVSGN) threads the bilayer. The Cytoplasmic segment spans residues 57–74 (VVTVMLIGRYRDMRTTTN). Residues 75–94 (LYLGSMAVSDLLILLGLPFD) form a helical membrane-spanning segment. Residues 95–112 (LYRLWRSRPWVFGPLLCR) lie on the Extracellular side of the membrane. The cysteines at positions 111 and 235 are disulfide-linked. Residues 113 to 134 (LSLYVGEGCTYATLLHMTALSV) traverse the membrane as a helical segment. The Cytoplasmic portion of the chain corresponds to 135 to 157 (ERYLAICRPLRARVLVTRRRVRA). The chain crosses the membrane as a helical span at residues 158-178 (LIAVLWAVALLSAGPFLFLVG). Residues 179 to 246 (VEQDPGISVV…PSPAQLGALR (68 aa)) lie on the Extracellular side of the membrane. An N-linked (GlcNAc...) asparagine glycan is attached at N192. A helical membrane pass occupies residues 247–270 (VMLWVTTAYFFLPFLCLSILYGLI). The Cytoplasmic segment spans residues 271–298 (GRELWSSRRPLRGPAASGRERGHRQTVR). A helical membrane pass occupies residues 299–320 (VLLVVVLAFIICWLPFHVGRII). Over 321–334 (YINTEDSRMMYFSQ) the chain is Extracellular. Residues 335-358 (YFNIVALQLFYLSASINPILYNLI) traverse the membrane as a helical segment. At 359-412 (SKKYRAAAFKLLLARKSRPRGFHRSRDTAGEVAGDTGGDTVGYTETSANVKTMG) the chain is on the cytoplasmic side.

The protein belongs to the G-protein coupled receptor 1 family. As to expression, expressed only in thyroid, stomach, and bone marrow.

The protein resides in the cell membrane. In terms of biological role, receptor for motilin. In Homo sapiens (Human), this protein is Motilin receptor (MLNR).